Here is a 360-residue protein sequence, read N- to C-terminus: Protein Wnt-2 (360 aa).

A signal peptide spans 1–25 (MNAPLCGIWLWLPLLLTWLTPEVSS). 11 cysteine pairs are disulfide-bonded: Cys76/Cys87, Cys127/Cys135, Cys137/Cys157, Cys206/Cys220, Cys208/Cys215, Cys278/Cys309, Cys294/Cys304, Cys308/Cys348, Cys324/Cys339, Cys326/Cys336, and Cys331/Cys332. Ser212 is lipidated: O-palmitoleoyl serine; by PORCN. The N-linked (GlcNAc...) asparagine glycan is linked to Asn295.

The protein belongs to the Wnt family. Post-translationally, palmitoleoylation is required for efficient binding to frizzled receptors. Depalmitoleoylation leads to Wnt signaling pathway inhibition.

The protein resides in the secreted. Its subcellular location is the extracellular space. It is found in the extracellular matrix. Its function is as follows. Ligand for members of the frizzled family of seven transmembrane receptors. Functions in the canonical Wnt signaling pathway that results in activation of transcription factors of the TCF/LEF family. Functions as a upstream regulator of FGF10 expression. Plays an important role in embryonic lung development. May contribute to embryonic brain development by regulating the proliferation of dopaminergic precursors and neurons. This chain is Protein Wnt-2 (WNT2), found in Otolemur garnettii (Small-eared galago).